Consider the following 98-residue polypeptide: Co-chaperonin GroES (98 aa).

Belongs to the GroES chaperonin family. As to quaternary structure, heptamer of 7 subunits arranged in a ring. Interacts with the chaperonin GroEL.

It is found in the cytoplasm. In terms of biological role, together with the chaperonin GroEL, plays an essential role in assisting protein folding. The GroEL-GroES system forms a nano-cage that allows encapsulation of the non-native substrate proteins and provides a physical environment optimized to promote and accelerate protein folding. GroES binds to the apical surface of the GroEL ring, thereby capping the opening of the GroEL channel. In Rhizobium leguminosarum bv. trifolii (strain WSM2304), this protein is Co-chaperonin GroES.